The chain runs to 138 residues: Large ribosomal subunit protein uL14m (138 aa).

Belongs to the universal ribosomal protein uL14 family. Component of the mitochondrial large ribosomal subunit (mt-LSU). Mature yeast 74S mitochondrial ribosomes consist of a small (37S) and a large (54S) subunit. The 37S small subunit contains a 15S ribosomal RNA (15S mt-rRNA) and 34 different proteins. The 54S large subunit contains a 21S rRNA (21S mt-rRNA) and 46 different proteins.

Its subcellular location is the mitochondrion. In terms of biological role, component of the mitochondrial ribosome (mitoribosome), a dedicated translation machinery responsible for the synthesis of mitochondrial genome-encoded proteins, including at least some of the essential transmembrane subunits of the mitochondrial respiratory chain. The mitoribosomes are attached to the mitochondrial inner membrane and translation products are cotranslationally integrated into the membrane. The protein is Large ribosomal subunit protein uL14m (MRPL38) of Saccharomyces cerevisiae (strain ATCC 204508 / S288c) (Baker's yeast).